A 473-amino-acid chain; its full sequence is Benzoyl-CoA oxygenase component B (473 aa).

It belongs to the benzoyl-CoA oxygenase component B family. In terms of assembly, monomer. The subunit composition of the active BoxA/BoxB protein complex is not known. The cofactor is Fe cation.

The enzyme catalyses benzoyl-CoA + NADPH + O2 + H(+) = 2,3-epoxy-2,3-dihydrobenzoyl-CoA + NADP(+) + H2O. The BoxA/BoxB complex catalyzes the aerobic reduction/oxygenation of the aromatic ring of benzoyl-CoA to form 2,3-epoxy-2,3-dihydrobenzoyl-CoA. BoxB acts as the benzoyl-CoA oxygenase, after being reduced by the reductase component BoxA. BoxAB does not act on NADH or benzoate. The sequence is that of Benzoyl-CoA oxygenase component B (boxB) from Aromatoleum evansii (Azoarcus evansii).